Here is a 345-residue protein sequence, read N- to C-terminus: GTP cyclohydrolase-2 (345 aa).

The segment at Met-1–Gly-27 is disordered. Residue Arg-143 to Glu-147 coordinates GTP. Zn(2+)-binding residues include Cys-148, Cys-159, and Cys-161. Residues Gln-164, Glu-197–Arg-199, and Thr-219 each bind GTP. Asp-231 functions as the Proton acceptor in the catalytic mechanism. Residue Arg-233 is the Nucleophile of the active site. Residues Thr-254 and Lys-259 each contribute to the GTP site. The interval Pro-312–Ile-345 is disordered. The span at Thr-317–Ile-345 shows a compositional bias: polar residues.

It belongs to the GTP cyclohydrolase II family. The cofactor is Zn(2+).

It catalyses the reaction GTP + 4 H2O = 2,5-diamino-6-hydroxy-4-(5-phosphoribosylamino)-pyrimidine + formate + 2 phosphate + 3 H(+). The protein operates within cofactor biosynthesis; riboflavin biosynthesis; 5-amino-6-(D-ribitylamino)uracil from GTP: step 1/4. Catalyzes the conversion of GTP to 2,5-diamino-6-ribosylamino-4(3H)-pyrimidinone 5'-phosphate (DARP), formate and pyrophosphate. This chain is GTP cyclohydrolase-2 (RIB1), found in Saccharomyces cerevisiae (strain ATCC 204508 / S288c) (Baker's yeast).